The sequence spans 185 residues: UPF0301 protein HCH_00550 (185 aa).

The protein belongs to the UPF0301 (AlgH) family.

This chain is UPF0301 protein HCH_00550, found in Hahella chejuensis (strain KCTC 2396).